The sequence spans 142 residues: Large ribosomal subunit protein uL11 (142 aa).

The protein belongs to the universal ribosomal protein uL11 family. As to quaternary structure, part of the ribosomal stalk of the 50S ribosomal subunit. Interacts with L10 and the large rRNA to form the base of the stalk. L10 forms an elongated spine to which L12 dimers bind in a sequential fashion forming a multimeric L10(L12)X complex. One or more lysine residues are methylated.

In terms of biological role, forms part of the ribosomal stalk which helps the ribosome interact with GTP-bound translation factors. The protein is Large ribosomal subunit protein uL11 of Shewanella sediminis (strain HAW-EB3).